Consider the following 204-residue polypeptide: Recombination protein RecR (204 aa).

The C4-type zinc-finger motif lies at 58 to 75; it reads CSICQNVTDRDADPCRIC. A Toprim domain is found at 83 to 181; the sequence is SVICVVESPV…MVTKIARGIP (99 aa).

This sequence belongs to the RecR family.

May play a role in DNA repair. It seems to be involved in an RecBC-independent recombinational process of DNA repair. It may act with RecF and RecO. The protein is Recombination protein RecR of Chlorobium phaeovibrioides (strain DSM 265 / 1930) (Prosthecochloris vibrioformis (strain DSM 265)).